A 371-amino-acid polypeptide reads, in one-letter code: Queuine tRNA-ribosyltransferase (371 aa).

Residue Asp-90 is the Proton acceptor of the active site. Residues 90-94 (DSGGF), Asp-144, Gln-189, and Gly-215 contribute to the substrate site. Residues 246–252 (GVGTPEN) form an RNA binding region. Asp-265 serves as the catalytic Nucleophile. Residues 270–274 (TRNAR) are RNA binding; important for wobble base 34 recognition. Residues Cys-303, Cys-305, Cys-308, and His-334 each contribute to the Zn(2+) site.

The protein belongs to the queuine tRNA-ribosyltransferase family. As to quaternary structure, homodimer. Within each dimer, one monomer is responsible for RNA recognition and catalysis, while the other monomer binds to the replacement base PreQ1. Zn(2+) is required as a cofactor.

The catalysed reaction is 7-aminomethyl-7-carbaguanine + guanosine(34) in tRNA = 7-aminomethyl-7-carbaguanosine(34) in tRNA + guanine. Its pathway is tRNA modification; tRNA-queuosine biosynthesis. In terms of biological role, catalyzes the base-exchange of a guanine (G) residue with the queuine precursor 7-aminomethyl-7-deazaguanine (PreQ1) at position 34 (anticodon wobble position) in tRNAs with GU(N) anticodons (tRNA-Asp, -Asn, -His and -Tyr). Catalysis occurs through a double-displacement mechanism. The nucleophile active site attacks the C1' of nucleotide 34 to detach the guanine base from the RNA, forming a covalent enzyme-RNA intermediate. The proton acceptor active site deprotonates the incoming PreQ1, allowing a nucleophilic attack on the C1' of the ribose to form the product. After dissociation, two additional enzymatic reactions on the tRNA convert PreQ1 to queuine (Q), resulting in the hypermodified nucleoside queuosine (7-(((4,5-cis-dihydroxy-2-cyclopenten-1-yl)amino)methyl)-7-deazaguanosine). The protein is Queuine tRNA-ribosyltransferase of Helicobacter pylori (strain J99 / ATCC 700824) (Campylobacter pylori J99).